The sequence spans 371 residues: Peptide chain release factor 2 (371 aa).

Gln-247 carries the N5-methylglutamine modification.

This sequence belongs to the prokaryotic/mitochondrial release factor family. Methylated by PrmC. Methylation increases the termination efficiency of RF2.

Its subcellular location is the cytoplasm. Functionally, peptide chain release factor 2 directs the termination of translation in response to the peptide chain termination codons UGA and UAA. This is Peptide chain release factor 2 from Caulobacter vibrioides (strain ATCC 19089 / CIP 103742 / CB 15) (Caulobacter crescentus).